Here is a 187-residue protein sequence, read N- to C-terminus: UPF0167 protein MT2352 (187 aa).

Belongs to the UPF0167 family.

This is UPF0167 protein MT2352 from Mycobacterium tuberculosis (strain CDC 1551 / Oshkosh).